We begin with the raw amino-acid sequence, 130 residues long: Con-Ins M1 (130 aa).

The signal sequence occupies residues 1–21 (MTTSSYFLLVALGLLLYVCQS). 4 disulfides stabilise this stretch: cysteine 29-cysteine 107, cysteine 41-cysteine 110, cysteine 53-cysteine 123, and cysteine 109-cysteine 114. A 4-hydroxyproline; partial modification is found at proline 34. The propeptide at 59-92 (AHGGTNDARATTGRALSLSKRRGFLSMLKRRGKR) is c peptide. Glutamate 118 bears the 4-carboxyglutamate; partial mark. Serine 129 is subject to Serine amide.

The protein belongs to the insulin family. As to quaternary structure, heterodimer of A and B chains; disulfide-linked. As to expression, expressed by the venom gland.

The protein localises to the secreted. Its function is as follows. This venom insulin facilitates prey capture by rapidly inducing hypoglycemic shock. Intraperitoneal injection of this peptide into zebrafish lowers blood glucose with the same potency than human insulin. In vivo, when applied to water, this peptide reduces overall locomotor activity of zebrafish larvae, observed as a significant decrease in the percentage of time spent swimming and movement frequency. The protein is Con-Ins M1 of Conus marmoreus (Marble cone).